The chain runs to 269 residues: [LysW]-aminoadipate kinase (269 aa).

5-8 (KVGG) lines the ATP pocket. Arg-64 is a substrate binding site. Tyr-78 lines the ATP pocket. Asn-168 is a substrate binding site.

Belongs to the acetylglutamate kinase family. LysZ subfamily.

The protein localises to the cytoplasm. The enzyme catalyses [amino-group carrier protein]-C-terminal-N-(1,4-dicarboxybutan-1-yl)-L-glutamine + ATP = [amino-group carrier protein]-C-terminal-N-(1-carboxy-5-phosphooxy-5-oxopentan-1-yl)-L-glutamine + ADP. Its pathway is amino-acid biosynthesis; L-lysine biosynthesis via AAA pathway; L-lysine from L-alpha-aminoadipate (Thermus route): step 2/5. In terms of biological role, catalyzes the phosphorylation of LysW-gamma-alpha-aminoadipate. Does not phosphorylate N-acetyl-glutamate. This Thermus thermophilus (strain ATCC BAA-163 / DSM 7039 / HB27) protein is [LysW]-aminoadipate kinase.